Here is a 185-residue protein sequence, read N- to C-terminus: Threonylcarbamoyl-AMP synthase (185 aa).

Residues 1 to 185 (MDNFEQVLNA…AKTSQILRQG (185 aa)) form the YrdC-like domain. Positions 163 to 185 (ETSGRDKPSEIRDAKTSQILRQG) are disordered. Over residues 164-177 (TSGRDKPSEIRDAK) the composition is skewed to basic and acidic residues.

It belongs to the SUA5 family. TsaC subfamily.

It is found in the cytoplasm. It carries out the reaction L-threonine + hydrogencarbonate + ATP = L-threonylcarbamoyladenylate + diphosphate + H2O. Its function is as follows. Required for the formation of a threonylcarbamoyl group on adenosine at position 37 (t(6)A37) in tRNAs that read codons beginning with adenine. Catalyzes the conversion of L-threonine, HCO(3)(-)/CO(2) and ATP to give threonylcarbamoyl-AMP (TC-AMP) as the acyladenylate intermediate, with the release of diphosphate. The chain is Threonylcarbamoyl-AMP synthase from Vibrio parahaemolyticus serotype O3:K6 (strain RIMD 2210633).